The chain runs to 84 residues: Small ribosomal subunit protein bS18 (84 aa).

It belongs to the bacterial ribosomal protein bS18 family. Part of the 30S ribosomal subunit. Forms a tight heterodimer with protein bS6.

In terms of biological role, binds as a heterodimer with protein bS6 to the central domain of the 16S rRNA, where it helps stabilize the platform of the 30S subunit. The polypeptide is Small ribosomal subunit protein bS18 (Polynucleobacter necessarius subsp. necessarius (strain STIR1)).